Reading from the N-terminus, the 747-residue chain is Superkiller protein 7 (747 aa).

Residues 14–51 are disordered; sequence KSKGLLSADQSHSTSKSASLLERLHKNRETKDNNAETK. Positions 21 to 31 are enriched in polar residues; the sequence is ADQSHSTSKSA. Positions 35-51 are enriched in basic and acidic residues; sequence ERLHKNRETKDNNAETK. 2 positions are modified to phosphoserine: serine 88 and serine 90. The tract at residues 89-117 is disordered; it reads NSDLEKQGKSVTLDSKENELPTKRKSPDD. Residues 265 to 503 form the tr-type G domain; sequence PLNLTCLFLG…YVPEWYEGPT (239 aa). The segment at 274 to 281 is G1; the sequence is GDTNAGKS. Residue 274–281 participates in GTP binding; that stretch reads GDTNAGKS. The segment at 331–335 is G2; that stretch reads GFSMF. Residues 356 to 359 are G3; it reads DTPG. Residues 356 to 360 and 427 to 430 contribute to the GTP site; these read DTPGS and NKAD. The tract at residues 427-430 is G4; sequence NKAD. The tract at residues 467-469 is G5; that stretch reads SGL.

This sequence belongs to the TRAFAC class translation factor GTPase superfamily. Classic translation factor GTPase family. In terms of assembly, interacts with the exosome and with the SKI complex composed of at least SKI2, SKI3 and SKI8. Interacts directly with SKI3 and SKI8.

It is found in the cytoplasm. In terms of biological role, represses the expression of non-poly(A) mRNAs like L-A or M viruses and is therefore involved in antiviral system. Mediates interactions via its N-terminus between the exosome and the SKI complex which operate in the 3'-to-5' mRNA-decay pathway. By interacting with NAM7, is also required for nonsense-mediated 3'-to-5' mRNA-decay (NMD). May recognize a stalled 80S ribosome at the 3'-end of a nonstop mRNA which leads to the recruitment of the exosome and SKI complexes to the mRNAs to be degraded. This is Superkiller protein 7 (SKI7) from Saccharomyces cerevisiae (strain ATCC 204508 / S288c) (Baker's yeast).